The primary structure comprises 227 residues: (S)-2-haloacid dehalogenase (227 aa).

Catalysis depends on aspartate 10, which acts as the Nucleophile. Residues leucine 11–tyrosine 12, arginine 41, and serine 118–asparagine 119 each bind an (S)-2-haloacid. Residues serine 175–aspartate 180 are important for catalytic activity.

This sequence belongs to the HAD-like hydrolase superfamily. S-2-haloalkanoic acid dehalogenase family.

It catalyses the reaction an (S)-2-haloacid + H2O = a (2R)-2-hydroxycarboxylate + a halide anion + H(+). The enzyme catalyses (S)-2-chloropropanoate + H2O = (R)-lactate + chloride + H(+). In terms of biological role, catalyzes the hydrolytic dehalogenation of small (S)-2-haloalkanoic acids to yield the corresponding (R)-2-hydroxyalkanoic acids. Acts on acids of short chain lengths, C(2) to C(4), with inversion of configuration at C-2. Active with 2-halogenated carboxylic acids and converts only the S-isomer (or L-isomer) of 2-chloropropionic acid with inversion of configuration to produce R-lactate (or D-isomer). The polypeptide is (S)-2-haloacid dehalogenase (dhl VII) (Pseudomonas fluorescens).